The chain runs to 884 residues: Bifunctional heparan sulfate N-deacetylase/N-sulfotransferase 2 (884 aa).

The Cytoplasmic segment spans residues 1 to 18 (MLKLWKVVRPARQLELHR). The helical; Signal-anchor for type II membrane protein transmembrane segment at 19–39 (LILLLIAFSLGSMGFLAYYVS) threads the bilayer. Over 40 to 884 (TSPKAKEPLP…REELQHSSSG (845 aa)) the chain is Lumenal. A heparan sulfate N-deacetylase 2 region spans residues 41–598 (SPKAKEPLPL…KRHKDIWSKE (558 aa)). The segment at 49-82 (PLPLGDCSSSGAAGGPGPVRPPVPPRPPRPPETA) is disordered. The segment covering 66–79 (PVRPPVPPRPPRPP) has biased composition (pro residues). 2 N-linked (GlcNAc...) asparagine glycosylation sites follow: N351 and N401. The interval 599–884 (KTCDRLPKFL…REELQHSSSG (286 aa)) is heparan sulfate N-sulfotransferase 2. K614 (for sulfotransferase activity) is an active-site residue. 614-618 (KTGTT) is a binding site for 3'-phosphoadenylyl sulfate. N-linked (GlcNAc...) asparagine glycosylation is present at N667. S712 contributes to the 3'-phosphoadenylyl sulfate binding site. Residues N727 and N803 are each glycosylated (N-linked (GlcNAc...) asparagine). An intrachain disulfide couples C818 to C828. 833-837 (KGRKY) contributes to the 3'-phosphoadenylyl sulfate binding site.

This sequence belongs to the sulfotransferase 1 family. NDST subfamily. As to quaternary structure, monomer.

The protein resides in the golgi apparatus membrane. It catalyses the reaction alpha-D-glucosaminyl-[heparan sulfate](n) + 3'-phosphoadenylyl sulfate = N-sulfo-alpha-D-glucosaminyl-[heparan sulfate](n) + adenosine 3',5'-bisphosphate + 2 H(+). It functions in the pathway glycan metabolism; heparan sulfate biosynthesis. It participates in glycan metabolism; heparin biosynthesis. Essential bifunctional enzyme that catalyzes both the N-deacetylation and the N-sulfation of glucosamine (GlcNAc) of the glycosaminoglycan in heparan sulfate. Modifies the GlcNAc-GlcA disaccharide repeating sugar backbone to make N-sulfated heparosan, a prerequisite substrate for later modifications in heparin biosynthesis. Plays a role in determining the extent and pattern of sulfation of heparan sulfate. Required for the exosomal release of SDCBP, CD63 and syndecan. This chain is Bifunctional heparan sulfate N-deacetylase/N-sulfotransferase 2 (NDST2), found in Bos taurus (Bovine).